The primary structure comprises 432 residues: Adenosylhomocysteinase (432 aa).

Ser2 is modified (N-acetylserine). 3 residues coordinate substrate: Thr57, Asp131, and Glu156. 157 to 159 lines the NAD(+) pocket; sequence TTT. Position 183 is a phosphoserine (Ser183). Substrate-binding residues include Lys186 and Asp190. At Lys186 the chain carries N6-(2-hydroxyisobutyryl)lysine. Tyr193 is modified (phosphotyrosine). Residues 222-227, Glu243, Asn248, 299-301, Asn346, and His353 each bind NAD(+); these read GDVGKG and IGH.

The protein belongs to the adenosylhomocysteinase family. Homotetramer. Interaction with AHCYL1. The cofactor is NAD(+).

The protein resides in the cytoplasm. It is found in the melanosome. The protein localises to the nucleus. Its subcellular location is the endoplasmic reticulum. The enzyme catalyses S-adenosyl-L-homocysteine + H2O = L-homocysteine + adenosine. The protein operates within amino-acid biosynthesis; L-homocysteine biosynthesis; L-homocysteine from S-adenosyl-L-homocysteine: step 1/1. Its function is as follows. Catalyzes the hydrolysis of S-adenosyl-L-homocysteine to form adenosine and homocysteine. Binds copper ions. In Homo sapiens (Human), this protein is Adenosylhomocysteinase (AHCY).